The following is a 650-amino-acid chain: Acetyl-coenzyme A synthetase (650 aa).

Residues 189 to 192 (RGGK), T307, and N331 contribute to the CoA site. Residues 383–385 (GEP), 407–412 (DTWWQT), D496, and R511 contribute to the ATP site. Residue S519 coordinates CoA. R522 serves as a coordination point for ATP. 3 residues coordinate Mg(2+): V533, H535, and V538. CoA is bound at residue R580. At K605 the chain carries N6-acetyllysine.

Belongs to the ATP-dependent AMP-binding enzyme family. Mg(2+) serves as cofactor. Post-translationally, acetylated. Deacetylation by the SIR2-homolog deacetylase activates the enzyme.

The enzyme catalyses acetate + ATP + CoA = acetyl-CoA + AMP + diphosphate. Its function is as follows. Catalyzes the conversion of acetate into acetyl-CoA (AcCoA), an essential intermediate at the junction of anabolic and catabolic pathways. AcsA undergoes a two-step reaction. In the first half reaction, AcsA combines acetate with ATP to form acetyl-adenylate (AcAMP) intermediate. In the second half reaction, it can then transfer the acetyl group from AcAMP to the sulfhydryl group of CoA, forming the product AcCoA. In Syntrophobacter fumaroxidans (strain DSM 10017 / MPOB), this protein is Acetyl-coenzyme A synthetase.